Here is a 325-residue protein sequence, read N- to C-terminus: uncharacterized protein (325 aa).

The signal sequence occupies residues 1-26 (MQGRVAGSCAPLGLLLVCLHLPGLFA). The segment covering 41 to 60 (GTNLPQLGQPSSTGPSNSEH) has biased composition (polar residues). Disordered regions lie at residues 41 to 110 (GTNL…MDSW) and 147 to 189 (GSGP…AGGK). Residues 147 to 157 (GSGPLPGESSP) show a composition bias toward low complexity.

In terms of assembly, binds to numerous extracellular matrix proteins. As to expression, expressed in skin and tonsils.

Its subcellular location is the secreted. The protein localises to the extracellular space. The protein resides in the extracellular matrix. This is an uncharacterized protein from Homo sapiens (Human).